A 585-amino-acid polypeptide reads, in one-letter code: Cytochrome P450 monooxygenase AOL_s00215g278 (585 aa).

Cysteine 518 contacts heme.

The protein belongs to the cytochrome P450 family. Heme serves as cofactor.

It functions in the pathway secondary metabolite biosynthesis; terpenoid biosynthesis. Functionally, cytochrome P450 monooxygenase; part of the gene cluster that mediates the biosynthesis of sesquiterpenyl epoxy-cyclohexenoids (SECs) such as anthrobotrisins and arthrosporols, metabolites that possess a novel hybrid carbon skeleton consisting of a polyketide-derived epoxycyclohexenol combined with a terpenoid-derived monocyclic sesquiterpenol substructure (PKS-PTS hybrid). The SEC pathway plays an important role for fungal soil colonization via decreasing fungal nematode-capturing ability. Within the pathway, the cytochrome P450 monooxygenase AOL_s00215g278 plays a role in the oxygenation of the phenol moiety, most likely in the epoxy formation. The pathway begins with the biosynthesis of 6-methylsalicylic acid (6-MSA), the first precursor of the polyketide-derived epoxycyclohexenol in arthrosporols, by the polyketide synthase (PKS) AOL_s00215g283 via condensation of 1 acetate and 3 malonate units. The 6-methylsalicylic acid decarboxylase AOL_s00215g281 then catalyzes the decarboxylation of 6-methylsalicylic acid to yield m-cresol. The cytochrome P450 monooxygenase AOL_s00215g282 further oxidizes m-cresol to yield toluquinol. With the assistance of the oxidoreductase AOL_s00215g277, the polyprenyl transferase AOL_s00215g276 catalyzes the farnesylation of toluquinol to produce farnesyl hydroquinone, the hybrid precursor for biosynthesis of SECs. Farnesyl hydroquinone undergoes epoxidation and then subsequent dehydrogenation to form farnesyl epoxy-quinone, the first and simplest SEC. The cytochrome P450 monooxygenase AOL_s00215g278 and the FAD-dependent monooxygenase AOL_s00215g279 might be involved in the oxygenation of the phenol moiety, most likely in the epoxy formation. The cytochrome P450 monooxygenases AOL_s00215g274 and AOL_s00215g280 are involved in specific regional ketone reductions at respectively C-4 and C-1 of farnesyl epoxy-quinone PubMed:33823587. This chain is Cytochrome P450 monooxygenase AOL_s00215g278, found in Arthrobotrys oligospora (strain ATCC 24927 / CBS 115.81 / DSM 1491) (Nematode-trapping fungus).